The chain runs to 119 residues: MKKRNRLKKNEEFQKVFKKGQSMANRQFVIYQLDQPNQDELRLGLSVSKKIGNAVMRNRIKRLIRQVFLEEGHKLKQEKDYIVIARKPASELTFEETKKSLQHLFRKSAVYQQQPKKSS.

It belongs to the RnpA family. Consists of a catalytic RNA component (M1 or rnpB) and a protein subunit.

The catalysed reaction is Endonucleolytic cleavage of RNA, removing 5'-extranucleotides from tRNA precursor.. In terms of biological role, RNaseP catalyzes the removal of the 5'-leader sequence from pre-tRNA to produce the mature 5'-terminus. It can also cleave other RNA substrates such as 4.5S RNA. The protein component plays an auxiliary but essential role in vivo by binding to the 5'-leader sequence and broadening the substrate specificity of the ribozyme. The protein is Ribonuclease P protein component of Bacillus pumilus (strain SAFR-032).